A 79-amino-acid chain; its full sequence is Small ribosomal subunit protein bS21 (79 aa).

Residues 58–79 (ARKKMQREGLLPMKPKPMPGMR) form a disordered region.

It belongs to the bacterial ribosomal protein bS21 family.

This Beijerinckia indica subsp. indica (strain ATCC 9039 / DSM 1715 / NCIMB 8712) protein is Small ribosomal subunit protein bS21.